The following is a 306-amino-acid chain: NAD kinase 1 (306 aa).

Residue aspartate 67 is the Proton acceptor of the active site. NAD(+) contacts are provided by residues 67–68 (DG), 149–150 (NE), aspartate 181, and 192–197 (TGYTVS).

This sequence belongs to the NAD kinase family. A divalent metal cation is required as a cofactor.

The protein localises to the cytoplasm. It carries out the reaction NAD(+) + ATP = ADP + NADP(+) + H(+). Its function is as follows. Involved in the regulation of the intracellular balance of NAD and NADP, and is a key enzyme in the biosynthesis of NADP. Catalyzes specifically the phosphorylation on 2'-hydroxyl of the adenosine moiety of NAD to yield NADP. The chain is NAD kinase 1 from Trichormus variabilis (strain ATCC 29413 / PCC 7937) (Anabaena variabilis).